We begin with the raw amino-acid sequence, 107 residues long: Integration host factor subunit beta (107 aa).

A compositionally biased stretch (basic and acidic residues) spans 82 to 101 (PGKELRERVDRRAGEPLKAE). A disordered region spans residues 82–107 (PGKELRERVDRRAGEPLKAEDPDDDL).

The protein belongs to the bacterial histone-like protein family. In terms of assembly, heterodimer of an alpha and a beta chain.

This protein is one of the two subunits of integration host factor, a specific DNA-binding protein that functions in genetic recombination as well as in transcriptional and translational control. The chain is Integration host factor subunit beta from Paraburkholderia xenovorans (strain LB400).